The sequence spans 555 residues: Formate--tetrahydrofolate ligase (555 aa).

65-72 (TPAGEGKS) serves as a coordination point for ATP.

The protein belongs to the formate--tetrahydrofolate ligase family.

The enzyme catalyses (6S)-5,6,7,8-tetrahydrofolate + formate + ATP = (6R)-10-formyltetrahydrofolate + ADP + phosphate. The protein operates within one-carbon metabolism; tetrahydrofolate interconversion. This Staphylococcus aureus (strain bovine RF122 / ET3-1) protein is Formate--tetrahydrofolate ligase.